A 405-amino-acid chain; its full sequence is Tryptophan synthase beta chain (405 aa).

An N6-(pyridoxal phosphate)lysine modification is found at lysine 98.

It belongs to the TrpB family. Tetramer of two alpha and two beta chains. Pyridoxal 5'-phosphate is required as a cofactor.

The catalysed reaction is (1S,2R)-1-C-(indol-3-yl)glycerol 3-phosphate + L-serine = D-glyceraldehyde 3-phosphate + L-tryptophan + H2O. Its pathway is amino-acid biosynthesis; L-tryptophan biosynthesis; L-tryptophan from chorismate: step 5/5. In terms of biological role, the beta subunit is responsible for the synthesis of L-tryptophan from indole and L-serine. The polypeptide is Tryptophan synthase beta chain (Xanthomonas euvesicatoria pv. vesicatoria (strain 85-10) (Xanthomonas campestris pv. vesicatoria)).